A 274-amino-acid polypeptide reads, in one-letter code: Homeobox-leucine zipper protein HAT9 (274 aa).

Residues 64–74 show a composition bias toward low complexity; sequence SSHSGVSSFSS. Residues 64–96 form a disordered region; it reads SSHSGVSSFSSGRVVKRERDGGEESPEEEEMTE. The homeobox DNA-binding region spans 110–169; it reads SARKKLRLTKQQSALLEESFKDHSTLNPKQKQVLARQLNLRPRQVEVWFQNRRARTKLKQ. The segment at 177–198 is leucine-zipper; that stretch reads LKKCCETLADENIRLQKEIQEL.

It belongs to the HD-ZIP homeobox family. Class II subfamily.

The protein resides in the nucleus. Its function is as follows. Probable transcription factor. The polypeptide is Homeobox-leucine zipper protein HAT9 (HAT9) (Arabidopsis thaliana (Mouse-ear cress)).